We begin with the raw amino-acid sequence, 322 residues long: Arginase-1 (322 aa).

An N6-succinyllysine modification is found at Lys-17. Phosphoserine is present on residues Ser-62 and Ser-72. Lys-75 is modified (N6-succinyllysine). Mn(2+)-binding residues include His-101, Asp-124, His-126, and Asp-128. Substrate contacts are provided by residues 126-130 (HTDIN) and 137-139 (SGN). Ser-163 is modified (phosphoserine). Asp-183 provides a ligand contact to substrate. Ser-217 is modified (phosphoserine). 2 residues coordinate Mn(2+): Asp-232 and Asp-234. Residues Thr-246 and Glu-277 each contribute to the substrate site.

Belongs to the arginase family. As to quaternary structure, homotrimer. Interacts with CMTM6. It depends on Mn(2+) as a cofactor. Within the immune system initially reported to be selectively expressed in granulocytes (polymorphonuclear leukocytes [PMNs]). Also detected in macrophages mycobacterial granulomas. Expressed in group2 innate lymphoid cells (ILC2s) during lung disease.

It is found in the cytoplasm. The protein localises to the cytoplasmic granule. The enzyme catalyses L-arginine + H2O = urea + L-ornithine. It participates in nitrogen metabolism; urea cycle; L-ornithine and urea from L-arginine: step 1/1. Functionally, key element of the urea cycle converting L-arginine to urea and L-ornithine, which is further metabolized into metabolites proline and polyamides that drive collagen synthesis and bioenergetic pathways critical for cell proliferation, respectively; the urea cycle takes place primarily in the liver and, to a lesser extent, in the kidneys. Its function is as follows. Functions in L-arginine homeostasis in nonhepatic tissues characterized by the competition between nitric oxide synthase (NOS) and arginase for the available intracellular substrate arginine. Arginine metabolism is a critical regulator of innate and adaptive immune responses. Involved in an antimicrobial effector pathway in polymorphonuclear granulocytes (PMN). Upon PMN cell death is liberated from the phagolysosome and depletes arginine in the microenvironment leading to suppressed T cell and natural killer (NK) cell proliferation and cytokine secretion. In group 2 innate lymphoid cells (ILC2s) promotes acute type 2 inflammation in the lung and is involved in optimal ILC2 proliferation but not survival. In humans, the immunological role in the monocytic/macrophage/dendritic cell (DC) lineage is unsure. In Homo sapiens (Human), this protein is Arginase-1 (ARG1).